Here is a 75-residue protein sequence, read N- to C-terminus: Penaeidin-3l (75 aa).

A signal peptide spans 1–19 (MRLVVCLVFLASFALVCQG). Pyrrolidone carboxylic acid is present on Q20. 3 cysteine pairs are disulfide-bonded: C44/C59, C48/C66, and C60/C67. Serine amide is present on S74.

It belongs to the penaeidin family.

The protein localises to the cytoplasmic granule. In terms of biological role, antibacterial and antifungal activity. Presents chitin-binding activity. The protein is Penaeidin-3l of Penaeus setiferus (Atlantic white shrimp).